The following is an 877-amino-acid chain: DNA polymerase I (877 aa).

A 5'-3' exonuclease domain is found at 180–272; it reads TPSQFIDLKA…GLEDTLLKEK (93 aa). The 157-residue stretch at 312 to 468 folds into the 3'-5' exonuclease domain; sequence FEIVTDKSSV…AKEKMMAELI (157 aa).

Belongs to the DNA polymerase type-A family. In terms of assembly, single-chain monomer with multiple functions.

It carries out the reaction DNA(n) + a 2'-deoxyribonucleoside 5'-triphosphate = DNA(n+1) + diphosphate. Its function is as follows. In addition to polymerase activity, this DNA polymerase exhibits 3'-5' and 5'-3' exonuclease activity. This Lactococcus lactis subsp. cremoris (strain MG1363) protein is DNA polymerase I (polA).